The chain runs to 363 residues: 3-dehydroquinate synthase (363 aa).

Residues 72–77 (SGEKEK), 130–131 (TT), Lys-142, and Lys-151 contribute to the NAD(+) site. Zn(2+) contacts are provided by Glu-184, His-247, and His-264.

This sequence belongs to the sugar phosphate cyclases superfamily. Dehydroquinate synthase family. Co(2+) is required as a cofactor. Zn(2+) serves as cofactor. It depends on NAD(+) as a cofactor.

It localises to the cytoplasm. The catalysed reaction is 7-phospho-2-dehydro-3-deoxy-D-arabino-heptonate = 3-dehydroquinate + phosphate. The protein operates within metabolic intermediate biosynthesis; chorismate biosynthesis; chorismate from D-erythrose 4-phosphate and phosphoenolpyruvate: step 2/7. In terms of biological role, catalyzes the conversion of 3-deoxy-D-arabino-heptulosonate 7-phosphate (DAHP) to dehydroquinate (DHQ). This chain is 3-dehydroquinate synthase, found in Bacillus anthracis (strain A0248).